Here is a 288-residue protein sequence, read N- to C-terminus: Stress response protein YhaX (288 aa).

This is Stress response protein YhaX (yhaX) from Bacillus subtilis (strain 168).